Reading from the N-terminus, the 384-residue chain is Chaperone protein DnaJ (384 aa).

The J domain occupies 4–68 (DFYDVLGVSR…EKRQMYDQLG (65 aa)). 2 disordered regions span residues 74-105 (QAQK…GMGG) and 113-132 (NNLF…QGRD). Residues 79–105 (GAGGGGGGRGQGNPFGGGGNPFGGMGG) show a composition bias toward gly residues. The segment at 147-229 (GVERDVTIRR…CRGSGRVRRT (83 aa)) adopts a CR-type zinc-finger fold. Positions 160, 163, 177, 180, 203, 206, 217, and 220 each coordinate Zn(2+). CXXCXGXG motif repeat units follow at residues 160 to 167 (CPECDGEG), 177 to 184 (CSECNGSG), 203 to 210 (CRACGGEG), and 217 to 224 (CSECRGSG).

Belongs to the DnaJ family. As to quaternary structure, homodimer. It depends on Zn(2+) as a cofactor.

It is found in the cytoplasm. Functionally, participates actively in the response to hyperosmotic and heat shock by preventing the aggregation of stress-denatured proteins and by disaggregating proteins, also in an autonomous, DnaK-independent fashion. Unfolded proteins bind initially to DnaJ; upon interaction with the DnaJ-bound protein, DnaK hydrolyzes its bound ATP, resulting in the formation of a stable complex. GrpE releases ADP from DnaK; ATP binding to DnaK triggers the release of the substrate protein, thus completing the reaction cycle. Several rounds of ATP-dependent interactions between DnaJ, DnaK and GrpE are required for fully efficient folding. Also involved, together with DnaK and GrpE, in the DNA replication of plasmids through activation of initiation proteins. The chain is Chaperone protein DnaJ from Haloferax mediterranei (strain ATCC 33500 / DSM 1411 / JCM 8866 / NBRC 14739 / NCIMB 2177 / R-4) (Halobacterium mediterranei).